The following is a 205-amino-acid chain: Probable GTP-binding protein EngB (205 aa).

An EngB-type G domain is found at 27-201; sequence EGMEIAFAGR…AAKLDSWFSS (175 aa). GTP is bound by residues 35-42, 62-66, 80-83, 147-150, and 180-182; these read GRSNAGKS, GRTQL, DLPG, TKAD, and FSA. The Mg(2+) site is built by Ser-42 and Thr-64.

Belongs to the TRAFAC class TrmE-Era-EngA-EngB-Septin-like GTPase superfamily. EngB GTPase family. The cofactor is Mg(2+).

Necessary for normal cell division and for the maintenance of normal septation. The chain is Probable GTP-binding protein EngB from Mannheimia succiniciproducens (strain KCTC 0769BP / MBEL55E).